A 744-amino-acid chain; its full sequence is Tripartite motif-containing protein 2 (744 aa).

Ser10 is subject to Phosphoserine. The segment at 23-64 (CSICLERYKNPKVLPCLHTFCERCLQNYIPAHSLTLSCPVCR) adopts an RING-type zinc-finger fold. Residues 113 to 154 (GKPLSCPNHDGNVMEFYCQSCETAMCRECTEGEHAEHPTVPL) form a B box-type zinc finger. The Zn(2+) site is built by Cys118, His121, Cys141, and His146. A Filamin repeat occupies 320 to 421 (TTNAVASETV…IRGSPFKLKV (102 aa)). Thr371 bears the Phosphothreonine mark. Residues Ser375, Ser424, and Ser428 each carry the phosphoserine modification. Residues 432 to 462 (EGVKRRVKSPGSGHVKQKAVKRPASMYSTGK) form a disordered region. NHL repeat units follow at residues 473-516 (IFRV…FSND), 520-563 (KSRF…FSSD), 564-605 (GKFK…FQPN), 609-652 (VTRF…FNQE), 656-699 (MLKF…FDGS), and 700-743 (GSFL…YRYL).

This sequence belongs to the TRIM/RBCC family. Forms homooligomers. Interacts with TRIM3; this interaction reduces TRIM2 activity. Interacts with myosin V; myosin V may not be a substrate for ubiquitination. Interacts with NEFL. Interacts with phosphorylated BCL2L11. Interacts with SIRPA. Post-translationally, RING-type zinc finger-dependent and UBE2D1-dependent autoubiquitination.

It localises to the cytoplasm. The catalysed reaction is S-ubiquitinyl-[E2 ubiquitin-conjugating enzyme]-L-cysteine + [acceptor protein]-L-lysine = [E2 ubiquitin-conjugating enzyme]-L-cysteine + N(6)-ubiquitinyl-[acceptor protein]-L-lysine.. The protein operates within protein modification; protein ubiquitination. Its function is as follows. UBE2D1-dependent E3 ubiquitin-protein ligase that mediates the ubiquitination of NEFL and of phosphorylated BCL2L11. Plays a neuroprotective function. May play a role in neuronal rapid ischemic tolerance. Plays a role in antiviral immunity and limits New World arenavirus infection independently of its ubiquitin ligase activity. In Callithrix jacchus (White-tufted-ear marmoset), this protein is Tripartite motif-containing protein 2 (TRIM2).